A 641-amino-acid polypeptide reads, in one-letter code: 1-deoxy-D-xylulose-5-phosphate synthase (641 aa).

Thiamine diphosphate-binding positions include H71 and 112 to 114 (SHA). D144 lines the Mg(2+) pocket. Residues 145-146 (GA), N173, Y284, and E365 each bind thiamine diphosphate. N173 contributes to the Mg(2+) binding site.

It belongs to the transketolase family. DXPS subfamily. As to quaternary structure, homodimer. Requires Mg(2+) as cofactor. Thiamine diphosphate is required as a cofactor.

The enzyme catalyses D-glyceraldehyde 3-phosphate + pyruvate + H(+) = 1-deoxy-D-xylulose 5-phosphate + CO2. The protein operates within metabolic intermediate biosynthesis; 1-deoxy-D-xylulose 5-phosphate biosynthesis; 1-deoxy-D-xylulose 5-phosphate from D-glyceraldehyde 3-phosphate and pyruvate: step 1/1. In terms of biological role, catalyzes the acyloin condensation reaction between C atoms 2 and 3 of pyruvate and glyceraldehyde 3-phosphate to yield 1-deoxy-D-xylulose-5-phosphate (DXP). This chain is 1-deoxy-D-xylulose-5-phosphate synthase, found in Mycolicibacterium paratuberculosis (strain ATCC BAA-968 / K-10) (Mycobacterium paratuberculosis).